The sequence spans 241 residues: Biosynthetic peptidoglycan transglycosylase (241 aa).

Residues 19-39 (AILAVLGVWIAGILLFSVMPV) form a helical membrane-spanning segment.

Belongs to the glycosyltransferase 51 family.

The protein localises to the cell inner membrane. The enzyme catalyses [GlcNAc-(1-&gt;4)-Mur2Ac(oyl-L-Ala-gamma-D-Glu-L-Lys-D-Ala-D-Ala)](n)-di-trans,octa-cis-undecaprenyl diphosphate + beta-D-GlcNAc-(1-&gt;4)-Mur2Ac(oyl-L-Ala-gamma-D-Glu-L-Lys-D-Ala-D-Ala)-di-trans,octa-cis-undecaprenyl diphosphate = [GlcNAc-(1-&gt;4)-Mur2Ac(oyl-L-Ala-gamma-D-Glu-L-Lys-D-Ala-D-Ala)](n+1)-di-trans,octa-cis-undecaprenyl diphosphate + di-trans,octa-cis-undecaprenyl diphosphate + H(+). It participates in cell wall biogenesis; peptidoglycan biosynthesis. Functionally, peptidoglycan polymerase that catalyzes glycan chain elongation from lipid-linked precursors. The chain is Biosynthetic peptidoglycan transglycosylase from Cronobacter sakazakii (strain ATCC BAA-894) (Enterobacter sakazakii).